The chain runs to 428 residues: Trigger factor (428 aa).

The PPIase FKBP-type domain maps to 165–240; it reads ADLIKLDAEG…VKEVKRMELP (76 aa).

Belongs to the FKBP-type PPIase family. Tig subfamily.

It is found in the cytoplasm. It catalyses the reaction [protein]-peptidylproline (omega=180) = [protein]-peptidylproline (omega=0). Functionally, involved in protein export. Acts as a chaperone by maintaining the newly synthesized protein in an open conformation. Functions as a peptidyl-prolyl cis-trans isomerase. The protein is Trigger factor of Prosthecochloris aestuarii (strain DSM 271 / SK 413).